The sequence spans 93 residues: Small ribosomal subunit protein uS19 (93 aa).

It belongs to the universal ribosomal protein uS19 family.

Protein S19 forms a complex with S13 that binds strongly to the 16S ribosomal RNA. In Helicobacter pylori (strain ATCC 700392 / 26695) (Campylobacter pylori), this protein is Small ribosomal subunit protein uS19 (rpsS).